Consider the following 355-residue polypeptide: Iron deficiency-induced protein A (355 aa).

Residues 1 to 34 constitute a signal peptide (tat-type signal); sequence MEKVGRRVFLGMGAAATAYVTHHLWNQNAESSYA. The Fe cation site is built by histidine 49, tyrosine 50, tyrosine 180, tyrosine 236, and tyrosine 237.

It belongs to the bacterial solute-binding protein 1 family. Post-translationally, predicted to be exported by the Tat system. The position of the signal peptide cleavage has not been experimentally proven.

The protein resides in the cellular thylakoid membrane. Plays an important role in protecting the acceptor side of photosystem II (PSII) against oxidative damage, especially under iron-limiting growth conditions. Its function is as follows. May also be part of a periplasmic ABC transporter complex involved in iron import. The sequence is that of Iron deficiency-induced protein A (idiA) from Thermosynechococcus vestitus (strain NIES-2133 / IAM M-273 / BP-1).